We begin with the raw amino-acid sequence, 20 residues long: Unknown protein NF045 from 2D-PAGE (20 aa).

The polypeptide is Unknown protein NF045 from 2D-PAGE (Naegleria fowleri (Brain eating amoeba)).